Reading from the N-terminus, the 259-residue chain is uncharacterized protein (259 aa).

Positions 1–22 (MKHSKKLLLCISFLLITFFISG) are cleaved as a signal peptide. Cys23 carries N-palmitoyl cysteine lipidation. Cys23 is lipidated: S-diacylglycerol cysteine.

Belongs to the staphylococcal tandem lipoprotein family.

It is found in the cell membrane. This is an uncharacterized protein from Staphylococcus epidermidis (strain ATCC 35984 / DSM 28319 / BCRC 17069 / CCUG 31568 / BM 3577 / RP62A).